We begin with the raw amino-acid sequence, 559 residues long: MEAAAQFFVESPDVVYGPEAIEAQYEYRTTRVSREGGVLKVHPTSTRFTFRTARQVPRLGVMLVGWGGNNGSTLTAAVLANRLRLSWPTRSGRKEANYYGSLTQAGTVSLGLDAEGQEVFVPFSALLPMVAPNDLVFDGWDISSLNLAEAMRRAKVLDWGLQEQLWPHMEALRPRPSVYIPEFIAANQSARADNLIPGSRAQQLEQIRRDIRDFRSSAGLDKIIVLWTANTERFCEVIPGLNDTAENLLRTIELGLEVSPSTLFAVASILEGCAFLNGSPQNTLVPGALELAWQRRVFVGGDDFKSGQTKVKSVLVDFLIGSGLKTMSIVSYNHLGNNDGENLSAPLQFRSKEVSKSNVVDDMVQSNPVLYAPGEEPDHCVVIKYVPYVGDSKRALDEYTSELMLGGTNTLVLHNTCEDSLLAAPIMLDLALLTELCQRVSFCTDADPEPQTFHPVLSLLSFLFKAPLVPPGSPVVNALFRQRSCIENILRACLGLPPQNHMLLEHKMERPGPVLKRVGPVAAACPVLNKKGPVPAATNGCTGDANGHLQVEEPQMPTT.

Residues G67, G68, N69, N70, D141, S177, V178, Q188, R191, T228, A229, N230, T231, G278, S279, D303, S306, N337, N338, D339, and K352 each contribute to the NAD(+) site. S279 carries the post-translational modification Phosphoserine. Position 357 is a phosphoserine (S357). NAD(+) is bound by residues G390, D391, D419, and S420.

This sequence belongs to the myo-inositol 1-phosphate synthase family. It depends on NAD(+) as a cofactor.

The protein resides in the cytoplasm. It catalyses the reaction D-glucose 6-phosphate = 1D-myo-inositol 3-phosphate. It functions in the pathway polyol metabolism; myo-inositol biosynthesis; myo-inositol from D-glucose 6-phosphate: step 1/2. Functionally, key enzyme in myo-inositol biosynthesis pathway that catalyzes the conversion of glucose 6-phosphate to 1-myo-inositol 1-phosphate in a NAD-dependent manner. Rate-limiting enzyme in the synthesis of all inositol-containing compounds. The polypeptide is Inositol-3-phosphate synthase 1 (ISYNA1) (Macaca fascicularis (Crab-eating macaque)).